Here is an 80-residue protein sequence, read N- to C-terminus: Exodeoxyribonuclease 7 small subunit (80 aa).

Belongs to the XseB family. Heterooligomer composed of large and small subunits.

The protein resides in the cytoplasm. It carries out the reaction Exonucleolytic cleavage in either 5'- to 3'- or 3'- to 5'-direction to yield nucleoside 5'-phosphates.. In terms of biological role, bidirectionally degrades single-stranded DNA into large acid-insoluble oligonucleotides, which are then degraded further into small acid-soluble oligonucleotides. This chain is Exodeoxyribonuclease 7 small subunit, found in Edwardsiella ictaluri (strain 93-146).